A 149-amino-acid polypeptide reads, in one-letter code: Oligosaccharyltransferase complex subunit OSTC (149 aa).

Over 1–32 (METLYRVPFLVLECPNLKLKKPPWVHMPSAMT) the chain is Cytoplasmic. The helical transmembrane segment at 33–53 (VYALVVVSYFLITGGIIYDVI) threads the bilayer. Topologically, residues 54 to 83 (VEPPSVGSMTDEHGHQRPVAFLAYRVNGQY) are extracellular. The helical transmembrane segment at 84 to 104 (IMEGLASSFLFTMGGLGFIIL) threads the bilayer. Over 105–117 (DRSNAPNIPKLNR) the chain is Cytoplasmic. Residues 118-138 (FLLLFIGFVCVLLSFFMARVF) form a helical membrane-spanning segment. Residues 139-149 (MRMKLPGYLMG) lie on the Extracellular side of the membrane.

Belongs to the OSTC family. Component of STT3A-containing oligosaccharyl transferase (OST-A) complex. STT3A-containing complex assembly occurs through the formation of 3 subcomplexes. Subcomplex 1 contains RPN1 and TMEM258, subcomplex 2 contains the STT3A-specific subunits STT3A, DC2/OSTC, and KCP2 as well as the core subunit OST4, and subcomplex 3 contains RPN2, DAD1, and OST48. The OST-A complex can form stable complexes with the Sec61 complex or with both the Sec61 and TRAP complexes. Interacts with PSEN1 and NCSTN; indicative for an association with the gamma-secretase complex.

The protein resides in the endoplasmic reticulum. The protein localises to the membrane. The protein operates within protein modification; protein glycosylation. Functionally, subunit of STT3A-containing oligosaccharyl transferase (OST-A) complex that catalyzes the initial transfer of a defined glycan (Glc(3)Man(9)GlcNAc(2) in eukaryotes) from the lipid carrier dolichol-pyrophosphate to an asparagine residue within an Asn-X-Ser/Thr consensus motif in nascent polypeptide chains, the first step in protein N-glycosylation. N-glycosylation occurs cotranslationally and the complex associates with the Sec61 complex at the channel-forming translocon complex that mediates protein translocation across the endoplasmic reticulum (ER). Within the OST-A complex, acts as an adapter that anchors the OST-A complex to the Sec61 complex. May be involved in N-glycosylation of APP (amyloid-beta precursor protein). Can modulate gamma-secretase cleavage of APP by enhancing endoprotelysis of PSEN1. This chain is Oligosaccharyltransferase complex subunit OSTC, found in Canis lupus familiaris (Dog).